The sequence spans 132 residues: Small ribosomal subunit protein uS11 (132 aa).

This sequence belongs to the universal ribosomal protein uS11 family. As to quaternary structure, part of the 30S ribosomal subunit. Interacts with proteins S7 and S18. Binds to IF-3.

Functionally, located on the platform of the 30S subunit, it bridges several disparate RNA helices of the 16S rRNA. Forms part of the Shine-Dalgarno cleft in the 70S ribosome. This chain is Small ribosomal subunit protein uS11, found in Alkaliphilus metalliredigens (strain QYMF).